A 447-amino-acid chain; its full sequence is Methylenetetrahydrofolate--tRNA-(uracil-5-)-methyltransferase TrmFO (447 aa).

Residue 8 to 13 (GGGLAG) coordinates FAD. A disordered region spans residues 398-421 (NWGLVPAPPKRENGRRLGRQERRR). The segment covering 406-417 (PKRENGRRLGRQ) has biased composition (basic and acidic residues).

This sequence belongs to the MnmG family. TrmFO subfamily. FAD is required as a cofactor.

Its subcellular location is the cytoplasm. The enzyme catalyses uridine(54) in tRNA + (6R)-5,10-methylene-5,6,7,8-tetrahydrofolate + NADH + H(+) = 5-methyluridine(54) in tRNA + (6S)-5,6,7,8-tetrahydrofolate + NAD(+). It carries out the reaction uridine(54) in tRNA + (6R)-5,10-methylene-5,6,7,8-tetrahydrofolate + NADPH + H(+) = 5-methyluridine(54) in tRNA + (6S)-5,6,7,8-tetrahydrofolate + NADP(+). Catalyzes the folate-dependent formation of 5-methyl-uridine at position 54 (M-5-U54) in all tRNAs. This chain is Methylenetetrahydrofolate--tRNA-(uracil-5-)-methyltransferase TrmFO, found in Rubrobacter xylanophilus (strain DSM 9941 / JCM 11954 / NBRC 16129 / PRD-1).